The primary structure comprises 333 residues: Cytochrome f (333 aa).

The N-terminal stretch at 1-37 is a signal peptide; the sequence is MRNSCKKARRTRPLKATIQALLVAIATMTFFFTSDIA. Residues 38-298 lie on the Cytoplasmic side of the membrane; that stretch reads LPQSAAAYPF…TEIVLQDPNR (261 aa). Residues tyrosine 45, cysteine 66, cysteine 69, and histidine 70 each coordinate heme. The chain crosses the membrane as a helical span at residues 299 to 319; it reads VKWMIAFICLVMLAQLMLILK. Topologically, residues 320-333 are lumenal, thylakoid; the sequence is KKQVEKVQAAEMNF.

This sequence belongs to the cytochrome f family. The 4 large subunits of the cytochrome b6-f complex are cytochrome b6, subunit IV (17 kDa polypeptide, PetD), cytochrome f and the Rieske protein, while the 4 small subunits are PetG, PetL, PetM and PetN. The complex functions as a dimer. Heme is required as a cofactor.

The protein localises to the cellular thylakoid membrane. In terms of biological role, component of the cytochrome b6-f complex, which mediates electron transfer between photosystem II (PSII) and photosystem I (PSI), cyclic electron flow around PSI, and state transitions. In Mastigocladus laminosus (Fischerella sp.), this protein is Cytochrome f (petA).